The following is a 299-amino-acid chain: Probable endonuclease 4 (299 aa).

Residues His69, His110, Glu145, Asp179, His182, His214, Asp227, His229, and Glu259 each coordinate Zn(2+).

It belongs to the AP endonuclease 2 family. It depends on Zn(2+) as a cofactor.

It catalyses the reaction Endonucleolytic cleavage to 5'-phosphooligonucleotide end-products.. Endonuclease IV plays a role in DNA repair. It cleaves phosphodiester bonds at apurinic or apyrimidinic (AP) sites, generating a 3'-hydroxyl group and a 5'-terminal sugar phosphate. The chain is Probable endonuclease 4 from Geobacillus kaustophilus (strain HTA426).